Reading from the N-terminus, the 348-residue chain is F-box protein At2g20380 (348 aa).

The F-box domain occupies Ser-14–Arg-60.

This is F-box protein At2g20380 from Arabidopsis thaliana (Mouse-ear cress).